Here is a 185-residue protein sequence, read N- to C-terminus: Small ribosomal subunit protein uS5 (185 aa).

Positions 18 to 81 (FVDKLVHINR…ESAKRALIRV (64 aa)) constitute an S5 DRBM domain.

It belongs to the universal ribosomal protein uS5 family. Part of the 30S ribosomal subunit. Contacts proteins S4 and S8.

In terms of biological role, with S4 and S12 plays an important role in translational accuracy. Its function is as follows. Located at the back of the 30S subunit body where it stabilizes the conformation of the head with respect to the body. This Azorhizobium caulinodans (strain ATCC 43989 / DSM 5975 / JCM 20966 / LMG 6465 / NBRC 14845 / NCIMB 13405 / ORS 571) protein is Small ribosomal subunit protein uS5.